Consider the following 55-residue polypeptide: Large ribosomal subunit protein bL33 (55 aa).

It belongs to the bacterial ribosomal protein bL33 family. Part of the 50S ribosomal subunit. Contacts protein L35.

Its function is as follows. Binds the 23S rRNA and the E site tRNA. This Deinococcus radiodurans (strain ATCC 13939 / DSM 20539 / JCM 16871 / CCUG 27074 / LMG 4051 / NBRC 15346 / NCIMB 9279 / VKM B-1422 / R1) protein is Large ribosomal subunit protein bL33 (rpmG).